The chain runs to 373 residues: tRNA N6-adenosine threonylcarbamoyltransferase (373 aa).

Residues histidine 133, histidine 137, and tyrosine 154 each contribute to the a divalent metal cation site. Substrate is bound by residues 154-158, aspartate 186, glycine 201, glutamate 205, and asparagine 302; that span reads YVSGG. Residue aspartate 331 coordinates a divalent metal cation.

It belongs to the KAE1 / TsaD family. Component of the EKC/KEOPS complex composed of at least BUD32, CGI121, GON7, KAE1 and PCC1; the whole complex dimerizes. A divalent metal cation is required as a cofactor.

Its subcellular location is the cytoplasm. The protein localises to the nucleus. The catalysed reaction is L-threonylcarbamoyladenylate + adenosine(37) in tRNA = N(6)-L-threonylcarbamoyladenosine(37) in tRNA + AMP + H(+). Its function is as follows. Component of the EKC/KEOPS complex that is required for the formation of a threonylcarbamoyl group on adenosine at position 37 (t(6)A37) in tRNAs that read codons beginning with adenine. The complex is probably involved in the transfer of the threonylcarbamoyl moiety of threonylcarbamoyl-AMP (TC-AMP) to the N6 group of A37. KAE1 likely plays a direct catalytic role in this reaction, but requires other protein(s) of the complex to fulfill this activity. The EKC/KEOPS complex also promotes both telomere uncapping and telomere elongation. The complex is required for efficient recruitment of transcriptional coactivators. The chain is tRNA N6-adenosine threonylcarbamoyltransferase from Debaryomyces hansenii (strain ATCC 36239 / CBS 767 / BCRC 21394 / JCM 1990 / NBRC 0083 / IGC 2968) (Yeast).